The sequence spans 145 residues: Brain and acute leukemia cytoplasmic protein (145 aa).

Residue Gly2 is the site of N-myristoyl glycine attachment. Cys3 carries S-palmitoyl cysteine lipidation. Residues 3–35 form an interaction with CAMK2A region; that stretch reads CGGSRADAIEPRYYESWTRETESTWLTYTDSDA. The segment at 27–119 is disordered; sequence WLTYTDSDAP…AKRDAKRMPA (93 aa). The segment covering 32-46 has biased composition (low complexity); that stretch reads DSDAPPSAAAPDSGP. Residues 83 to 108 are compositionally biased toward polar residues; that stretch reads CETQCPNPQSLSSGPLTQKQNGLQTT. A compositionally biased stretch (basic and acidic residues) spans 109–119; that stretch reads EAKRDAKRMPA.

As to quaternary structure, interacts with CAMK2A. In terms of processing, palmitoylation and myristoylation target the protein to the lipid rafts. Predominantly expressed in neuroectoderm-derived tissues. Expressed in the brain and spinal cord, and at low levels, in the adrenal gland. In the bone marrow, confined to the CD34+ progenitor cells. Not found in peripheral blood mononuclear cells, nor lymph nodes. Tends to be expressed at high levels in acute myeloid leukemia and glioblastoma cells.

It is found in the cytoplasm. Its subcellular location is the synapse. The protein localises to the synaptosome. The protein resides in the membrane raft. It localises to the postsynaptic density. May play a synaptic role at the postsynaptic lipid rafts possibly through interaction with CAMK2A. The chain is Brain and acute leukemia cytoplasmic protein from Homo sapiens (Human).